The primary structure comprises 1437 residues: Protein SUPPRESSOR OF npr1-1, CONSTITUTIVE 1 (1437 aa).

Met-1 bears the N-acetylmethionine mark. The region spanning 19 to 182 is the TIR domain; that stretch reads RRYDVFPSFR…ELAEDVLRKT (164 aa). 28 to 33 is an NAD(+) binding site; the sequence is RGEDVR. Glu-93 is a catalytic residue. LRR repeat units lie at residues 554-576, 577-598, 600-621, 622-645, 647-668, 670-691, 692-715, 781-805, 807-828, 829-851, 852-875, 877-895, 897-918, 919-939, 940-962, 964-985, 1009-1029, 1030-1052, 1054-1075, 1076-1096, 1097-1121, 1123-1143, and 1161-1185; these read MRNLQYLEIGYYGDLPQSLVYLP, LKLRLLDWDDCPLKSLPSTFKA, YLVNLIMKYSKLEKLWEGTLPL, GSLKEMNLRYSNNLKEIPDLSLAI, LEELDLVGCKSLVTLPSSIQNA, KLIYLDMSDCKKLESFPTDLNL, ESLEYLNLTGCPNLRNFPAIKMGC, LGSLEGMDLSESENLTEIPDLSKAT, LESLILNNCKSLVTLPSTIGNL, HRLVRLEMKECTGLEVLPTDVNL, SSLETLDLSGCSSLRSFPLISTNI, WLYLENTAIEEIPSTIGNL, RLVRLEMKKCTGLEVLPTDVNL, SSLETLDLSGCSSLRSFPLIS, ESIKWLYLENTAIEEIPDLSKAT, LKNLKLNNCKSLVTLPTTIGNL, SSLMILDLSGCSSLRTFPLIS, TNIVWLYLENTAIEEIPSTIGNL, RLVKLEMKECTGLEVLPTDVNL, TRIECLYLQNTAIEEVPCCIEDFTR, TVLMMYCCQRLKTISPNIFRL, and LSDATVVATMEDHVSCVPLSENIEY.

The protein belongs to the disease resistance TIR-NB-LRR family. In terms of assembly, homodimer. Interacts (via TIR domain) with TPR1. Interacts with EDS1. Interacts with SRFR1. Interacts with HSP90-3. Binds to MORC1/CRT1. Interacts with TRAF1B. Met-1 is specifically acetylated by N-terminal acetyltransferase complex A (NatA). The NatA-mediated acetylation serves as a degradation signal. Post-translationally, met-1 is specifically acetylated by N-terminal acetyltransferase complex B (NatB). The NatB-mediated acetylation stabilizes SNC1. Expressed in guard cells and epidermal cells, but not detected in mesophyll cells.

The protein localises to the cytoplasm. The protein resides in the microsome. Its subcellular location is the nucleus. It catalyses the reaction NAD(+) + H2O = ADP-D-ribose + nicotinamide + H(+). Functionally, disease resistance protein of the TIR-NB-LRR-type. Part of the RPP5 locus that contains a cluster of several paralogous disease resistance (R) genes. Resistance proteins guard the plant against pathogens that contain an appropriate avirulence protein via an indirect interaction with this avirulence protein. That triggers a defense system including the hypersensitive response, which restricts the pathogen growth. Probably acts as a NAD(+) hydrolase (NADase): in response to activation, catalyzes cleavage of NAD(+) into ADP-D-ribose (ADPR) and nicotinamide; NAD(+) cleavage triggering a defense system that promotes cell death. Expression regulated by MOS1 at chromatin level. Nuclear localization of SNC1 is essential for its activity. ABA deficiency can rescue high-temperature inhibition of SNC1-mediated defense responses. The protein is Protein SUPPRESSOR OF npr1-1, CONSTITUTIVE 1 of Arabidopsis thaliana (Mouse-ear cress).